A 392-amino-acid polypeptide reads, in one-letter code: Esterase EstB (392 aa).

Catalysis depends on S75, which acts as the Acyl-ester intermediate.

It belongs to the class-A beta-lactamase family.

It is found in the cytoplasm. Its activity is regulated as follows. Strongly inhibited by eserin, NaF, HgCl2, SDS and Triton X-100. Functionally, acts on short-chain (C4-C6) fatty acid esters and triglycerides, including tertiary alcohol esters. Activity on p-nitrophenyl esters is generally higher than on o-nitrophenyl esters. Lacks beta-lactamase activity; it hydrolyzes the ester bond of cephalosporin substrates but there is no opening of the beta-lactam ring observed. The polypeptide is Esterase EstB (estB) (Burkholderia gladioli (Pseudomonas marginata)).